The primary structure comprises 429 residues: Adenylosuccinate synthetase (429 aa).

GTP is bound by residues 12–18 (GDEGKGK) and 40–42 (GHT). Catalysis depends on D13, which acts as the Proton acceptor. Mg(2+)-binding residues include D13 and G40. IMP contacts are provided by residues 13–16 (DEGK), 38–41 (NAGH), T129, R143, Q223, T238, and R302. The active-site Proton donor is H41. Position 298-304 (298-304 (TVTGRRR)) interacts with substrate. GTP-binding positions include R304, 330–332 (KLD), and 412–414 (STS).

The protein belongs to the adenylosuccinate synthetase family. In terms of assembly, homodimer. Mg(2+) serves as cofactor.

Its subcellular location is the cytoplasm. It carries out the reaction IMP + L-aspartate + GTP = N(6)-(1,2-dicarboxyethyl)-AMP + GDP + phosphate + 2 H(+). Its pathway is purine metabolism; AMP biosynthesis via de novo pathway; AMP from IMP: step 1/2. Functionally, plays an important role in the de novo pathway of purine nucleotide biosynthesis. Catalyzes the first committed step in the biosynthesis of AMP from IMP. This is Adenylosuccinate synthetase from Zymomonas mobilis subsp. mobilis (strain ATCC 31821 / ZM4 / CP4).